A 287-amino-acid chain; its full sequence is ATP synthase gamma chain (287 aa).

This sequence belongs to the ATPase gamma chain family. In terms of assembly, F-type ATPases have 2 components, CF(1) - the catalytic core - and CF(0) - the membrane proton channel. CF(1) has five subunits: alpha(3), beta(3), gamma(1), delta(1), epsilon(1). CF(0) has three main subunits: a, b and c.

Its subcellular location is the cell inner membrane. Its function is as follows. Produces ATP from ADP in the presence of a proton gradient across the membrane. The gamma chain is believed to be important in regulating ATPase activity and the flow of protons through the CF(0) complex. This chain is ATP synthase gamma chain, found in Pectobacterium carotovorum subsp. carotovorum (strain PC1).